A 339-amino-acid polypeptide reads, in one-letter code: Cyclin-Y-like protein 1 (339 aa).

Positions 181–263 (QLTAECAIVT…FLELLQFNIN (83 aa)) constitute a Cyclin N-terminal domain.

The protein belongs to the cyclin family. Cyclin Y subfamily.

Its subcellular location is the cell membrane. Functionally, key regulator of Wnt signaling implicated in various biological processes such as embryonic neurogenesis. The protein is Cyclin-Y-like protein 1 (ccnyl1) of Danio rerio (Zebrafish).